Consider the following 556-residue polypeptide: Portal protein (556 aa).

The interval Ala-527–Gln-556 is disordered. Over residues Leu-533–Ser-542 the composition is skewed to polar residues.

This sequence belongs to the podoviridae head-to-tail connector protein family. As to quaternary structure, homododecamer.

It localises to the virion. Forms the portal vertex of the capsid. This portal plays critical roles in head assembly, genome packaging, neck/tail attachment, and genome ejection. The portal protein multimerizes as a single ring-shaped homododecamer arranged around a central channel. This Salmonella phage epsilon15 protein is Portal protein.